A 261-amino-acid polypeptide reads, in one-letter code: Carnitinyl-CoA dehydratase (261 aa).

The active-site Nucleophile is the Glu111. The active-site Proton acceptor is Glu131.

The protein belongs to the enoyl-CoA hydratase/isomerase family.

The enzyme catalyses (R)-carnitinyl-CoA = crotonobetainyl-CoA + H2O. Its pathway is amine and polyamine metabolism; carnitine metabolism. Catalyzes the reversible dehydration of L-carnitinyl-CoA to crotonobetainyl-CoA. The polypeptide is Carnitinyl-CoA dehydratase (Salmonella enteritidis PT4 (strain P125109)).